The primary structure comprises 1291 residues: DNA-directed RNA polymerase subunit beta (1291 aa).

Belongs to the RNA polymerase beta chain family. As to quaternary structure, the RNAP catalytic core consists of 2 alpha, 1 beta, 1 beta' and 1 omega subunit. When a sigma factor is associated with the core the holoenzyme is formed, which can initiate transcription.

It catalyses the reaction RNA(n) + a ribonucleoside 5'-triphosphate = RNA(n+1) + diphosphate. Its function is as follows. DNA-dependent RNA polymerase catalyzes the transcription of DNA into RNA using the four ribonucleoside triphosphates as substrates. This chain is DNA-directed RNA polymerase subunit beta, found in Mycoplasma mycoides subsp. mycoides SC (strain CCUG 32753 / NCTC 10114 / PG1).